The primary structure comprises 723 residues: Probable alpha-fucosidase A (723 aa).

An N-terminal signal peptide occupies residues 1 to 15; the sequence is MRSLVLLGMSSLATA. 10 N-linked (GlcNAc...) asparagine glycosylation sites follow: Asn77, Asn98, Asn117, Asn171, Asn194, Asn243, Asn334, Asn558, Asn566, and Asn595.

The protein belongs to the glycosyl hydrolase 95 family.

It is found in the secreted. The catalysed reaction is an alpha-L-fucoside + H2O = L-fucose + an alcohol. Its function is as follows. Alpha-fucosidase involved in degradation of fucosylated xyloglucans. Hydrolyzes alpha-1,2-linked fucose. The protein is Probable alpha-fucosidase A (afcA) of Aspergillus oryzae (strain ATCC 42149 / RIB 40) (Yellow koji mold).